A 583-amino-acid polypeptide reads, in one-letter code: Sphingomyelin phosphodiesterase A (583 aa).

A signal peptide spans 1-21; it reads MKSIPIILLVLIGLLLASVYS. Positions 51–133 constitute a Saposin B-type domain; sequence IQLSCDVCQI…GYFKICSATG (83 aa). 3 disulfides stabilise this stretch: cysteine 55-cysteine 129, cysteine 58-cysteine 123, and cysteine 86-cysteine 97. A glycan (N-linked (GlcNAc...) asparagine) is linked at asparagine 72. N-linked (GlcNAc...) asparagine glycosylation is present at asparagine 182. Zn(2+) is bound by residues aspartate 193 and histidine 195. Cysteine 214 and cysteine 229 are oxidised to a cystine. 2 residues coordinate Zn(2+): aspartate 258 and asparagine 298. An N-linked (GlcNAc...) asparagine glycan is attached at asparagine 377. Zn(2+) is bound by residues histidine 401, histidine 436, and histidine 438. N-linked (GlcNAc...) asparagine glycans are attached at residues asparagine 495, asparagine 500, asparagine 537, and asparagine 547. A disulfide bridge connects residues cysteine 567 and cysteine 580.

The protein belongs to the acid sphingomyelinase family. Zn(2+) is required as a cofactor.

The protein localises to the secreted. Converts sphingomyelin to ceramide. This chain is Sphingomyelin phosphodiesterase A (sgmA), found in Dictyostelium discoideum (Social amoeba).